A 190-amino-acid chain; its full sequence is Vascular endothelial growth factor A (190 aa).

Residues 1-26 (MNFLLSWVHWSLALLLYLHHAKWSQA) form the signal peptide. 3 disulfide bridges follow: Cys-51/Cys-93, Cys-82/Cys-127, and Cys-86/Cys-129. N-linked (GlcNAc...) asparagine glycosylation is present at Asn-100.

This sequence belongs to the PDGF/VEGF growth factor family. As to quaternary structure, homodimer; disulfide-linked. Also found as heterodimer with PGF. Interacts with NRP1. Interacts with isoform 2 of BSG. Interacts with CD82; this interaction inhibits VEGFA-mediated signaling pathway.

It is found in the secreted. Its function is as follows. Growth factor active in angiogenesis, vasculogenesis and endothelial cell growth. Induces endothelial cell proliferation, promotes cell migration, inhibits apoptosis and induces permeabilization of blood vessels. Binds to the FLT1/VEGFR1 and KDR/VEGFR2 receptors, heparan sulfate and heparin. Binding to NRP1 receptor initiates a signaling pathway needed for motor neuron axon guidance and cell body migration, including for the caudal migration of facial motor neurons from rhombomere 4 to rhombomere 6 during embryonic development. Also binds the DEAR/FBXW7-AS1 receptor. This chain is Vascular endothelial growth factor A (VEGFA), found in Equus caballus (Horse).